The chain runs to 252 residues: MTTLEAVILGIVEGLTEFLPISSTGHLILVSNLLGIQQTEQHKAFEVSIQLGSILAVVFLYFKKFLDTNLMKRILIAFIPTGILGFVLYKIIKSLFNPYIVVFMLVFGGLLLILIELYHKNKSYDINSIYEVPYQKAFLIGVFQSLAMVPGTSRSGATIVGGLLLGLDRKTAAEFSFMLAVPTMFMATFYDVYKNRSNFNLSDWENLIVGFVVAFISALFAIKWLLKFISNHSFIPFGIYRIILGILYYLWY.

The next 7 membrane-spanning stretches (helical) occupy residues 1 to 21 (MTTLEAVILGIVEGLTEFLPI), 42 to 62 (HKAFEVSIQLGSILAVVFLYF), 74 to 94 (ILIAFIPTGILGFVLYKIIKS), 95 to 115 (LFNPYIVVFMLVFGGLLLILI), 172 to 192 (AAEFSFMLAVPTMFMATFYDV), 206 to 226 (NLIVGFVVAFISALFAIKWLL), and 232 to 252 (HSFIPFGIYRIILGILYYLWY).

The protein belongs to the UppP family.

It localises to the cell inner membrane. It catalyses the reaction di-trans,octa-cis-undecaprenyl diphosphate + H2O = di-trans,octa-cis-undecaprenyl phosphate + phosphate + H(+). Catalyzes the dephosphorylation of undecaprenyl diphosphate (UPP). Confers resistance to bacitracin. In Sulfurihydrogenibium sp. (strain YO3AOP1), this protein is Undecaprenyl-diphosphatase.